The sequence spans 287 residues: Pyridoxal kinase PdxY (287 aa).

Substrate is bound by residues Ser-10 and 45–46; that span reads TQ. ATP contacts are provided by residues Asp-112, Ala-144, Glu-149, Lys-182, and 209–212; that span reads RPLV. Asp-224 contacts substrate.

Belongs to the pyridoxine kinase family. PdxY subfamily. In terms of assembly, homodimer. It depends on Mg(2+) as a cofactor.

It catalyses the reaction pyridoxal + ATP = pyridoxal 5'-phosphate + ADP + H(+). It functions in the pathway cofactor metabolism; pyridoxal 5'-phosphate salvage; pyridoxal 5'-phosphate from pyridoxal: step 1/1. Functionally, pyridoxal kinase involved in the salvage pathway of pyridoxal 5'-phosphate (PLP). Catalyzes the phosphorylation of pyridoxal to PLP. This Shigella sonnei (strain Ss046) protein is Pyridoxal kinase PdxY.